The primary structure comprises 130 residues: Small ribosomal subunit protein uS11 (130 aa).

It belongs to the universal ribosomal protein uS11 family. In terms of assembly, part of the 30S ribosomal subunit. Interacts with proteins S7 and S18. Binds to IF-3.

Functionally, located on the platform of the 30S subunit, it bridges several disparate RNA helices of the 16S rRNA. Forms part of the Shine-Dalgarno cleft in the 70S ribosome. The protein is Small ribosomal subunit protein uS11 of Prochlorococcus marinus (strain MIT 9313).